The chain runs to 175 residues: ATP synthase subunit delta (175 aa).

The protein belongs to the ATPase delta chain family. F-type ATPases have 2 components, F(1) - the catalytic core - and F(0) - the membrane proton channel. F(1) has five subunits: alpha(3), beta(3), gamma(1), delta(1), epsilon(1). F(0) has three main subunits: a(1), b(2) and c(10-14). The alpha and beta chains form an alternating ring which encloses part of the gamma chain. F(1) is attached to F(0) by a central stalk formed by the gamma and epsilon chains, while a peripheral stalk is formed by the delta and b chains.

Its subcellular location is the cell inner membrane. Functionally, f(1)F(0) ATP synthase produces ATP from ADP in the presence of a proton or sodium gradient. F-type ATPases consist of two structural domains, F(1) containing the extramembraneous catalytic core and F(0) containing the membrane proton channel, linked together by a central stalk and a peripheral stalk. During catalysis, ATP synthesis in the catalytic domain of F(1) is coupled via a rotary mechanism of the central stalk subunits to proton translocation. In terms of biological role, this protein is part of the stalk that links CF(0) to CF(1). It either transmits conformational changes from CF(0) to CF(1) or is implicated in proton conduction. The protein is ATP synthase subunit delta of Xanthomonas euvesicatoria pv. vesicatoria (strain 85-10) (Xanthomonas campestris pv. vesicatoria).